Consider the following 164-residue polypeptide: MTEITFKGGPIHLKGQQINEGDFAPDFTVLDNDLNQVTLADYAGKKKLISVVPSIDTGVCDQQTRKFNSDASKEEGIVLTISADLPFAQKRWCASAGLDNVITLSDHRDLSFGENYGVVMEELRLLARAVFVLDADNKVVYKEIVSEGTDFPDFDAALAAYKNI.

In terms of domain architecture, Thioredoxin spans 18–163 (INEGDFAPDF…FDAALAAYKN (146 aa)). Cysteine 60 serves as the catalytic Cysteine sulfenic acid (-SOH) intermediate. Cysteines 60 and 93 form a disulfide.

The protein belongs to the peroxiredoxin family. Tpx subfamily. In terms of assembly, homodimer.

It catalyses the reaction a hydroperoxide + [thioredoxin]-dithiol = an alcohol + [thioredoxin]-disulfide + H2O. Its function is as follows. Thiol-specific peroxidase that catalyzes the reduction of hydrogen peroxide and organic hydroperoxides to water and alcohols, respectively. Plays a role in cell protection against oxidative stress by detoxifying peroxides. This chain is Thiol peroxidase, found in Staphylococcus aureus (strain COL).